We begin with the raw amino-acid sequence, 426 residues long: Histidine--tRNA ligase (426 aa).

The protein belongs to the class-II aminoacyl-tRNA synthetase family. As to quaternary structure, homodimer.

It localises to the cytoplasm. It catalyses the reaction tRNA(His) + L-histidine + ATP = L-histidyl-tRNA(His) + AMP + diphosphate + H(+). This Picosynechococcus sp. (strain ATCC 27264 / PCC 7002 / PR-6) (Agmenellum quadruplicatum) protein is Histidine--tRNA ligase.